The primary structure comprises 87 residues: Putative defensin-like protein 84 (87 aa).

The first 27 residues, methionine 1–glycine 27, serve as a signal peptide directing secretion. Disulfide bonds link cysteine 32-cysteine 73, cysteine 36-cysteine 54, cysteine 42-cysteine 71, and cysteine 46-cysteine 72.

This sequence belongs to the DEFL family.

It localises to the secreted. This Arabidopsis thaliana (Mouse-ear cress) protein is Putative defensin-like protein 84.